The sequence spans 300 residues: uncharacterized protein (300 aa).

Over residues 1–19 the composition is skewed to basic and acidic residues; that stretch reads MATKRAHPEDETHESKRAA. Residues 1–20 form a disordered region; sequence MATKRAHPEDETHESKRAAQ.

This is an uncharacterized protein from Orgyia pseudotsugata multicapsid polyhedrosis virus (OpMNPV).